We begin with the raw amino-acid sequence, 376 residues long: Alcohol dehydrogenase 6 (376 aa).

Zn(2+) is bound by residues C47, H69, C99, C102, C105, C113, and C175. NAD(+)-binding positions include 200–205 (GLGGVG), D224, R229, 293–295 (VGA), and R371.

This sequence belongs to the zinc-containing alcohol dehydrogenase family. Class-V subfamily. Dimer. Requires Zn(2+) as cofactor.

The protein resides in the cytoplasm. It carries out the reaction a primary alcohol + NAD(+) = an aldehyde + NADH + H(+). The enzyme catalyses a secondary alcohol + NAD(+) = a ketone + NADH + H(+). In terms of biological role, alcohol dehydrogenase. Catalyzes the NAD-dependent oxidation of primary alcohols to the corresponding aldehydes. Oxidizes secondary alcohols to the corresponding ketones. The sequence is that of Alcohol dehydrogenase 6 (Adh6) from Rattus norvegicus (Rat).